We begin with the raw amino-acid sequence, 407 residues long: Zinc finger protein 260 (407 aa).

The disordered stretch occupies residues 1–21; the sequence is MLESLQPESELLHDEPDPGEK. The segment covering 10–21 has biased composition (basic and acidic residues); it reads ELLHDEPDPGEK. Residues 23-45 form a C2H2-type 1 zinc finger; sequence YECDECRKTFSLEQHFVEHKKTH. The C2H2-type 2; degenerate zinc-finger motif lies at 51–73; it reads PECTGCGEEFSKASSLTRHLRSR. 11 C2H2-type zinc fingers span residues 79 to 101, 131 to 153, 159 to 181, 187 to 209, 215 to 237, 243 to 265, 271 to 293, 299 to 321, 327 to 349, 355 to 377, and 383 to 405; these read YKCG…QKQH, YACK…EKIH, FECN…QNVH, FKCN…QRIH, YECK…QRSH, YTCK…EKIH, YKCN…HNIH, YECN…VRIH, YECK…MRSH, YGCN…MRIH, and YQCS…QRIH.

This sequence belongs to the krueppel C2H2-type zinc-finger protein family. As to quaternary structure, binds DNA. Interacts with GATA4. As to expression, expressed in both embryonic, fetal and adult heart. Also expressed in lung, skeletal muscle and adrenal glands.

Its subcellular location is the nucleus. Its function is as follows. Transcription factor that acts as a cardiac regulator and an effector of alpha1-adrenergic signaling. Binds to PE response elements (PERE) present in the promoter of genes such as ANF/NPPA and acts as a direct transcriptional activator of NPPA. Also acts as a cofactor with GATA4, a key cardiac regulator. This is Zinc finger protein 260 (Znf260) from Rattus norvegicus (Rat).